The sequence spans 1004 residues: Caspase recruitment domain-containing protein 14 (1004 aa).

One can recognise a CARD domain in the interval 15–107 (DEETLWEMME…DVYTLVTGLQ (93 aa)). A coiled-coil region spans residues 128–409 (LAGAIGSLQE…RTQLRQLQAE (282 aa)). A maintains the protein in an inactive state region spans residues 409–568 (EPPGVLKQEA…RRPARRILSQ (160 aa)). Phosphoserine is present on serine 544. A PDZ domain is found at 568-658 (QVTMLAFQGD…FCCLSVKVNT (91 aa)). Residues 807–990 (AESCLTLVPY…LLSCVRQAIA (184 aa)) enclose the Guanylate kinase-like domain.

Interacts (via CARD domain) with BCL10 (via CARD domain). Forms a complex with MALT1 and BCL10; resulting in the formation of a CBM (CARD14-BLC10-MALT1) complex. Interacts with TRAF2, TRAF3 and TRAF6. As to expression, isoform 1 is detected in placenta and epidermal keratinocytes. Isoform 2 is detected in leukocytes and fetal brain.

The protein localises to the cytoplasm. In terms of biological role, acts as a scaffolding protein that can activate the inflammatory transcription factor NF-kappa-B and p38/JNK MAP kinase signaling pathways. Forms a signaling complex with BCL10 and MALT1, and activates MALT1 proteolytic activity and inflammatory gene expression. MALT1 is indispensable for CARD14-induced activation of NF-kappa-B and p38/JNK MAP kinases. May play a role in signaling mediated by TRAF2, TRAF3 and TRAF6 and protects cells against apoptosis. Not able to activate the inflammatory transcription factor NF-kappa-B and may function as a dominant negative regulator. The protein is Caspase recruitment domain-containing protein 14 (CARD14) of Homo sapiens (Human).